Consider the following 3718-residue polypeptide: Laminin subunit alpha-5 (3718 aa).

Positions 1-40 are cleaved as a signal peptide; the sequence is MAKRGGQLCAGSAPGALGPRSPAPRPLLLLLAGLALVGEA. The Laminin N-terminal domain occupies 46 to 304; the sequence is DGFSLHPPYF…SIKDISIGGR (259 aa). N-linked (GlcNAc...) asparagine glycosylation is found at asparagine 100, asparagine 148, and asparagine 248. Disulfide bonds link cysteine 305–cysteine 314, cysteine 307–cysteine 327, cysteine 329–cysteine 338, cysteine 341–cysteine 361, cysteine 364–cysteine 373, cysteine 366–cysteine 398, cysteine 401–cysteine 410, cysteine 413–cysteine 431, cysteine 434–cysteine 445, cysteine 436–cysteine 452, cysteine 454–cysteine 463, and cysteine 466–cysteine 476. Laminin EGF-like domains follow at residues 305–363, 364–433, and 434–479; these read CVCH…ECQS, CNCH…VCRP, and CDCE…CYPL. Asparagine 383 carries N-linked (GlcNAc...) asparagine glycosylation. A glycan (N-linked (GlcNAc...) asparagine) is linked at asparagine 457. Asparagine 485 carries an N-linked (GlcNAc...) asparagine glycan. 29 disulfide bridges follow: cysteine 500-cysteine 512, cysteine 502-cysteine 521, cysteine 523-cysteine 532, cysteine 535-cysteine 544, cysteine 547-cysteine 559, cysteine 549-cysteine 566, cysteine 568-cysteine 577, cysteine 580-cysteine 590, cysteine 593-cysteine 605, cysteine 595-cysteine 611, cysteine 613-cysteine 622, cysteine 625-cysteine 635, cysteine 638-cysteine 650, cysteine 640-cysteine 656, cysteine 658-cysteine 667, cysteine 670-cysteine 680, cysteine 683-cysteine 695, cysteine 685-cysteine 702, cysteine 704-cysteine 713, cysteine 716-cysteine 731, cysteine 752-cysteine 761, cysteine 764-cysteine 779, cysteine 782-cysteine 796, cysteine 784-cysteine 802, cysteine 804-cysteine 813, cysteine 816-cysteine 831, cysteine 834-cysteine 846, cysteine 836-cysteine 853, and cysteine 855-cysteine 864. 7 Laminin EGF-like domains span residues 500 to 546, 547 to 592, 593 to 637, 638 to 682, 683 to 728, 729 to 781, and 782 to 833; these read CDCN…SCHP, CQCS…LCQL, CGCS…DCHA, CACD…SCIP, CHCS…YCEA, GSCH…GCTR, and CSCD…GCRS. In terms of domain architecture, Laminin EGF-like 11; truncated spans 834 to 855; that stretch reads CRCDVGGALGQGCEPKTGACRC. Residues 856 to 1442 are domain IV 1 (domain IV B); sequence RPNTQGPTCS…SLFYNNGALP (587 aa). N-linked (GlcNAc...) asparagine glycosylation is found at asparagine 905, asparagine 926, and asparagine 964. The segment at 1253–1284 is disordered; it reads LTQSQELSPGAPPEGPQPRPPTAVDPNAEPTL. Positions 1262–1275 are enriched in pro residues; it reads GAPPEGPQPRPPTA. Asparagine 1335 is a glycosylation site (N-linked (GlcNAc...) asparagine). 16 disulfides stabilise this stretch: cysteine 1443–cysteine 1455, cysteine 1445–cysteine 1462, cysteine 1464–cysteine 1473, cysteine 1476–cysteine 1486, cysteine 1489–cysteine 1496, cysteine 1491–cysteine 1503, cysteine 1505–cysteine 1514, cysteine 1517–cysteine 1530, cysteine 1533–cysteine 1548, cysteine 1535–cysteine 1555, cysteine 1557–cysteine 1566, cysteine 1569–cysteine 1579, cysteine 1582–cysteine 1594, cysteine 1584–cysteine 1601, cysteine 1603–cysteine 1612, and cysteine 1615–cysteine 1630. 4 consecutive Laminin EGF-like domains span residues 1443 to 1488, 1489 to 1532, 1533 to 1581, and 1582 to 1632; these read CGCH…NCRP, CDCG…GCEE, CNCS…SCRP, and CDCH…GCTR. A glycan (N-linked (GlcNAc...) asparagine) is linked at asparagine 1534. Residues 1633–1642 enclose the Laminin EGF-like 16; first part domain; the sequence is CFCFGATERC. One can recognise a Laminin IV type A domain in the interval 1646 to 1831; sequence NLARHEFVDM…RGPPASNVEL (186 aa). 2 consecutive short sequence motifs (cell attachment site) follow at residues 1723–1725 and 1839–1841; these read RGD. Residues 1832–1864 enclose the Laminin EGF-like 16; second part domain; the sequence is CMCPANYRGDSCQECAPGYYRDTKGLFLGRCVP. 24 cysteine pairs are disulfide-bonded: cysteine 1865–cysteine 1874, cysteine 1867–cysteine 1881, cysteine 1884–cysteine 1893, cysteine 1896–cysteine 1912, cysteine 1915–cysteine 1930, cysteine 1917–cysteine 1939, cysteine 1941–cysteine 1950, cysteine 1953–cysteine 1968, cysteine 1971–cysteine 1986, cysteine 1973–cysteine 1993, cysteine 1996–cysteine 2005, cysteine 2008–cysteine 2022, cysteine 2025–cysteine 2035, cysteine 2027–cysteine 2042, cysteine 2044–cysteine 2053, cysteine 2056–cysteine 2069, cysteine 2072–cysteine 2083, cysteine 2074–cysteine 2090, cysteine 2092–cysteine 2101, cysteine 2104–cysteine 2116, cysteine 2119–cysteine 2126, cysteine 2121–cysteine 2133, cysteine 2135–cysteine 2144, and cysteine 2147–cysteine 2166. Laminin EGF-like domains lie at 1865 to 1914, 1915 to 1970, 1971 to 2024, 2025 to 2071, 2072 to 2118, and 2119 to 2168; these read CQCH…PCVS, CPCP…SCQP, CDCS…NCTR, CDCS…GCRP, CACG…GCRR, and CQCP…HCEV. N-linked (GlcNAc...) asparagine glycosylation is present at asparagine 2021. The segment at 2169–2735 is domain II and I; it reads CDHCVVLLLD…AQARSAASKV (567 aa). 7 N-linked (GlcNAc...) asparagine glycosylation sites follow: asparagine 2198, asparagine 2211, asparagine 2365, asparagine 2395, asparagine 2425, asparagine 2503, and asparagine 2570. Coiled coils occupy residues 2205–2257 and 2330–2464; these read ARLH…SQAT and TRDL…ASLD. 2 coiled-coil regions span residues 2604–2621 and 2639–2705; these read ARKN…AMLA and AEAL…LENR. Asparagine 2709 carries N-linked (GlcNAc...) asparagine glycosylation. Laminin G-like domains are found at residues 2736–2933, 2947–3119, 3128–3296, 3337–3511, and 3518–3689; these read KVSM…DKPC, GSYL…SFGC, TMTF…SVGC, AYQF…VTPC, and DGLF…MRGC. 2 disulfide bridges follow: cysteine 2903-cysteine 2933 and cysteine 3094-cysteine 3119. N-linked (GlcNAc...) asparagine glycans are attached at residues asparagine 3111, asparagine 3213, asparagine 3261, and asparagine 3291. 2 disulfides stabilise this stretch: cysteine 3265–cysteine 3296 and cysteine 3488–cysteine 3511. Asparagine 3623 and asparagine 3673 each carry an N-linked (GlcNAc...) asparagine glycan. Cysteine 3661 and cysteine 3689 are joined by a disulfide.

In terms of assembly, laminin is a complex glycoprotein, consisting of three different polypeptide chains (alpha, beta, gamma), which are bound to each other by disulfide bonds into a cross-shaped molecule comprising one long and three short arms with globules at each end. Alpha-5 is a subunit of laminin-10 (laminin-511), laminin-11 (laminin-521) and laminin-15 (laminin-523). In adult, high levels in heart, lung, and kidney; lower in brain, muscle and testis; very low in liver, gut and skin.

The protein localises to the secreted. Its subcellular location is the extracellular space. It is found in the extracellular matrix. The protein resides in the basement membrane. Its function is as follows. Binding to cells via a high affinity receptor, laminin is thought to mediate the attachment, migration and organization of cells into tissues during embryonic development by interacting with other extracellular matrix components. Alpha-5 may be the major laminin alpha chain of adult epithelial and/or endothelial basal laminae. Plays a role in the regulation of skeletogenesis, through a mechanism that involves integrin-mediated signaling and PTK2B/PYK2. The polypeptide is Laminin subunit alpha-5 (Lama5) (Mus musculus (Mouse)).